We begin with the raw amino-acid sequence, 113 residues long: Small ribosomal subunit protein bS6 (113 aa).

This sequence belongs to the bacterial ribosomal protein bS6 family.

In terms of biological role, binds together with bS18 to 16S ribosomal RNA. The sequence is that of Small ribosomal subunit protein bS6 (rpsF) from Buchnera aphidicola subsp. Acyrthosiphon pisum (strain APS) (Acyrthosiphon pisum symbiotic bacterium).